Here is a 202-residue protein sequence, read N- to C-terminus: MADEYLVPLDQYLAAGVHIGTQQKTKDMKKFIYRVRQDGLYVLDVRKTDERLKVAGKFLAKFEPQSILAVSVRLYGQKPVKKFGEVTGARAIPGRFLPGTMTNPAVKNFFEPDVLIVTDPRADHQAMREAVEIGIPIVALVDTENLLSYVDLAIPTNNKGRKALALIYWILAREILYNRGEIQSREDFKIPVEEFEMKIVRR.

This sequence belongs to the universal ribosomal protein uS2 family. In terms of assembly, part of the 30S ribosomal subunit.

This is Small ribosomal subunit protein uS2 from Pyrococcus furiosus (strain ATCC 43587 / DSM 3638 / JCM 8422 / Vc1).